The sequence spans 334 residues: Holliday junction branch migration complex subunit RuvB (334 aa).

The interval 4 to 184 (ADRLIQPQLQ…FGIPLRLEFY (181 aa)) is large ATPase domain (RuvB-L). ATP-binding positions include Arg24, Gly65, Lys68, Thr69, Thr70, 131 to 133 (EDY), Arg174, Tyr184, and Arg221. Thr69 contacts Mg(2+). Residues 185-255 (NIKDLSTIVT…VADHALDLLD (71 aa)) are small ATPAse domain (RuvB-S). Residues 258–334 (NEGFDYMDRK…YQHFQLIKPE (77 aa)) form a head domain (RuvB-H) region. Residues Arg294, Arg313, and Arg318 each contribute to the DNA site.

The protein belongs to the RuvB family. In terms of assembly, homohexamer. Forms an RuvA(8)-RuvB(12)-Holliday junction (HJ) complex. HJ DNA is sandwiched between 2 RuvA tetramers; dsDNA enters through RuvA and exits via RuvB. An RuvB hexamer assembles on each DNA strand where it exits the tetramer. Each RuvB hexamer is contacted by two RuvA subunits (via domain III) on 2 adjacent RuvB subunits; this complex drives branch migration. In the full resolvosome a probable DNA-RuvA(4)-RuvB(12)-RuvC(2) complex forms which resolves the HJ.

The protein resides in the cytoplasm. It catalyses the reaction ATP + H2O = ADP + phosphate + H(+). The RuvA-RuvB-RuvC complex processes Holliday junction (HJ) DNA during genetic recombination and DNA repair, while the RuvA-RuvB complex plays an important role in the rescue of blocked DNA replication forks via replication fork reversal (RFR). RuvA specifically binds to HJ cruciform DNA, conferring on it an open structure. The RuvB hexamer acts as an ATP-dependent pump, pulling dsDNA into and through the RuvAB complex. RuvB forms 2 homohexamers on either side of HJ DNA bound by 1 or 2 RuvA tetramers; 4 subunits per hexamer contact DNA at a time. Coordinated motions by a converter formed by DNA-disengaged RuvB subunits stimulates ATP hydrolysis and nucleotide exchange. Immobilization of the converter enables RuvB to convert the ATP-contained energy into a lever motion, pulling 2 nucleotides of DNA out of the RuvA tetramer per ATP hydrolyzed, thus driving DNA branch migration. The RuvB motors rotate together with the DNA substrate, which together with the progressing nucleotide cycle form the mechanistic basis for DNA recombination by continuous HJ branch migration. Branch migration allows RuvC to scan DNA until it finds its consensus sequence, where it cleaves and resolves cruciform DNA. The polypeptide is Holliday junction branch migration complex subunit RuvB (Shewanella sp. (strain W3-18-1)).